The primary structure comprises 357 residues: Alanine racemase (357 aa).

The active-site Proton acceptor; specific for D-alanine is Lys-35. Lys-35 bears the N6-(pyridoxal phosphate)lysine mark. Arg-131 lines the substrate pocket. Tyr-256 acts as the Proton acceptor; specific for L-alanine in catalysis. Met-304 provides a ligand contact to substrate.

The protein belongs to the alanine racemase family. Pyridoxal 5'-phosphate serves as cofactor.

It carries out the reaction L-alanine = D-alanine. It functions in the pathway amino-acid biosynthesis; D-alanine biosynthesis; D-alanine from L-alanine: step 1/1. Functionally, catalyzes the interconversion of L-alanine and D-alanine. May also act on other amino acids. The polypeptide is Alanine racemase (alr) (Legionella pneumophila (strain Paris)).